A 359-amino-acid chain; its full sequence is Phosphoribosylformylglycinamidine cyclo-ligase (359 aa).

This sequence belongs to the AIR synthase family.

The protein localises to the cytoplasm. It carries out the reaction 2-formamido-N(1)-(5-O-phospho-beta-D-ribosyl)acetamidine + ATP = 5-amino-1-(5-phospho-beta-D-ribosyl)imidazole + ADP + phosphate + H(+). Its pathway is purine metabolism; IMP biosynthesis via de novo pathway; 5-amino-1-(5-phospho-D-ribosyl)imidazole from N(2)-formyl-N(1)-(5-phospho-D-ribosyl)glycinamide: step 2/2. The chain is Phosphoribosylformylglycinamidine cyclo-ligase from Brucella canis (strain ATCC 23365 / NCTC 10854 / RM-666).